The following is a 702-amino-acid chain: MRYSHPLVPLSFMTTALVTTALPYANGPLHLGHLVGYIQADIWVRARRLGGHNTWFVCADDTHGTPIMLAAEKAGMPPEAFIATTQASHERDFAAFNVAFDHYDSTHSPVNRHLTEQSYLTLKQAGHITCRSVAQFYDPAKGMFLPDRYVKGTCPNCGATDQYGDNCEACGATYDPTELKNPYSVISGATPELRDSEHFFFEVAHFDTFLRHWLSGDVALPSVKNKLKEWLDAKGGLRPWDISRDAPYFGFKIPDQPGKYFYVWLDAPIGYLCSFKTLCTRIGEDFDTHLRSGTTTELHHFIGKDIVNFHALFWPAVLHGTGHRAPTRLHVNGYLTVDGAKMSKSRGTFIMARTYLDAGLEPDALRYYFAAKSSGDVDDLDLNLSDFVARVNADLVGKLVNLASRCASFIGTRFNGQLADTLPDRIQYDRFVAALTPIRDAYERNDTASAIRQTMQLADEANKYIDETKPWIIAKQHHADAQLHAVCTQGLNLFRVLITALKPILPHTSIQAETFLAAPVTAWQDVNQPLTGGHTIQPYSPLFTRIDKKIIEVMINASKDTLAPPPASAKQQNASMSNTAPPPTAEEPETTAPTIGIDDFAKLDLRIGKVLVCEYVEGSDKLLRFELDAGPLGKRQIFSGIRASYSNPEALIGRNVVFIANLAPRKMRFGISQGMILSAGFDNGTLALLDADSSAQPGMPVR.

A 'HIGH' region motif is present at residues 23-33 (PYANGPLHLGH). The Zn(2+) site is built by Cys154, Cys157, Cys167, and Cys170. Residues 341–345 (KMSKS) carry the 'KMSKS' region motif. Lys344 contributes to the ATP binding site. Residues 562 to 593 (LAPPPASAKQQNASMSNTAPPPTAEEPETTAP) form a disordered region. Over residues 569 to 578 (AKQQNASMSN) the composition is skewed to polar residues. Residues 599–702 (DFAKLDLRIG…SSAQPGMPVR (104 aa)) enclose the tRNA-binding domain.

This sequence belongs to the class-I aminoacyl-tRNA synthetase family. MetG type 1 subfamily. Homodimer. Requires Zn(2+) as cofactor.

The protein resides in the cytoplasm. It catalyses the reaction tRNA(Met) + L-methionine + ATP = L-methionyl-tRNA(Met) + AMP + diphosphate. In terms of biological role, is required not only for elongation of protein synthesis but also for the initiation of all mRNA translation through initiator tRNA(fMet) aminoacylation. The chain is Methionine--tRNA ligase from Xylella fastidiosa (strain M23).